The following is a 246-amino-acid chain: tRNA (guanine-N(7)-)-methyltransferase (246 aa).

S-adenosyl-L-methionine is bound by residues E77, E102, D129, and D152. The active site involves D152. Substrate-binding positions include K156, D188, and 225–228 (TKFE).

This sequence belongs to the class I-like SAM-binding methyltransferase superfamily. TrmB family.

The enzyme catalyses guanosine(46) in tRNA + S-adenosyl-L-methionine = N(7)-methylguanosine(46) in tRNA + S-adenosyl-L-homocysteine. It functions in the pathway tRNA modification; N(7)-methylguanine-tRNA biosynthesis. Catalyzes the formation of N(7)-methylguanine at position 46 (m7G46) in tRNA. The protein is tRNA (guanine-N(7)-)-methyltransferase of Haemophilus influenzae (strain 86-028NP).